Here is a 286-residue protein sequence, read N- to C-terminus: uncharacterized protein (286 aa).

Residues 4–18 (AVIG…IARN) and Thr-95 contribute to the NAD(+) site. Lys-171 is an active-site residue. Lys-239 serves as a coordination point for NAD(+).

This sequence belongs to the HIBADH-related family.

This is an uncharacterized protein from Bacillus subtilis (strain 168).